Consider the following 548-residue polypeptide: Natural resistance-associated macrophage protein 1 (548 aa).

Residues 1-38 (MPGDMGPPKQGGTRYGSISSPPSPGPQQAPPGGTYLSE) form a disordered region. Topologically, residues 1–55 (MPGDMGPPKQGGTRYGSISSPPSPGPQQAPPGGTYLSEKIPIPDTESGAFSLRKL) are cytoplasmic. The chain crosses the membrane as a helical span at residues 56–73 (WAFTGPGFLMSIAFLDPG). At 74–82 (NIESDLQAG) the chain is on the extracellular side. The helical transmembrane segment at 83-102 (AVAGFKLLWVLLWATVLGLL) threads the bilayer. The Cytoplasmic segment spans residues 103–139 (CQRLAARLGVVTGKDLGEVCHLYYPKVPRILLWLTIE). The chain crosses the membrane as a helical span at residues 140 to 160 (LAIVGSDMQEVIGTAIAFSLL). Residues 161–164 (SAGR) are Extracellular-facing. The helical transmembrane segment at 165 to 184 (IPLWGGVLITIVDTFFFLFL) threads the bilayer. Residues 185 to 193 (DNYGLRKLE) are Cytoplasmic-facing. A helical transmembrane segment spans residues 194 to 214 (AFFGFLITIMALTFGYEYVVA). Over 215 to 237 (RPAQGALLQGLFLPSCAGCGQPE) the chain is Extracellular. Residues 238–256 (LLQAVGIVGAIIMPHNIYL) traverse the membrane as a helical segment. The Cytoplasmic segment spans residues 257 to 284 (HSSLVKSREVDRSRRADIREANMYFLIE). The chain crosses the membrane as a helical span at residues 285–304 (ATIALSVSFLINLFVMAVFG). The Extracellular portion of the chain corresponds to 305-346 (QAFYKQTNQAAFNICANSSLHDYATIFPRNNLTVAVDIYQGG). Residues Asn-321 and Asn-335 are each glycosylated (N-linked (GlcNAc...) asparagine). Residues 347–366 (VILGCLFGPAALYIWAVGLL) traverse the membrane as a helical segment. The Cytoplasmic segment spans residues 367 to 397 (AAGQSSTMTGTYAGQFVMEGFLKLRWSRFAR). A helical membrane pass occupies residues 398–415 (VLLTRSCAILPTVLVAVF). Over 416–426 (RDLRDLSGLND) the chain is Extracellular. Residues 427 to 447 (LLNVLQSLLLPFAVLPILTFT) traverse the membrane as a helical segment. Over 448–463 (SMPAVMQEFANGLVSK) the chain is Cytoplasmic. The chain crosses the membrane as a helical span at residues 464 to 485 (VISSSIMVLVCAVNLYFVISYV). Residues 486–493 (PSLPHPDY) lie on the Extracellular side of the membrane. Residues 494 to 513 (FSLVALLAAAYLGLTTYLVW) form a helical membrane-spanning segment. Residues 514–548 (TCLITQGATLLAHSSHQRFLYGLPEEDQENGRTSG) are Cytoplasmic-facing.

Belongs to the NRAMP family.

It is found in the late endosome membrane. It localises to the lysosome membrane. The catalysed reaction is Zn(2+)(in) + H(+)(out) = Zn(2+)(out) + H(+)(in). It catalyses the reaction Fe(2+)(in) + H(+)(out) = Fe(2+)(out) + H(+)(in). It carries out the reaction Mn(2+)(in) + H(+)(out) = Mn(2+)(out) + H(+)(in). Its function is as follows. Macrophage-specific antiporter that fluxes metal ions in either direction against a proton gradient. Localized to late endosomal lysosomal membranes, delivers bivalent cations from the cytosol into these acidic compartments where they may directly affect antimicrobial activity. Involved in iron metabolism and host natural resistance to infection with intracellular parasites. Pathogen resistance involves sequestration of Fe(2+) and Mn(2+), cofactors of both prokaryotic and eukaryotic catalases and superoxide dismutases, not only to protect the macrophage against its own generation of reactive oxygen species, but to deny the cations to the pathogen for synthesis of its protective enzymes. The protein is Natural resistance-associated macrophage protein 1 (SLC11A1) of Cervus elaphus (Red deer).